Reading from the N-terminus, the 67-residue chain is KKDGYPVEGDNCAFVCFGYDNAYCDKLCKDKKADSGYCYWVHILCYCYGLPDKEPTKTNGRCKPGKK.

Residues 2–63 enclose the LCN-type CS-alpha/beta domain; sequence KDGYPVEGDN…EPTKTNGRCK (62 aa). Intrachain disulfides connect cysteine 12–cysteine 62, cysteine 16–cysteine 38, cysteine 24–cysteine 45, and cysteine 28–cysteine 47. At proline 64 the chain carries Proline amide.

This sequence belongs to the long (4 C-C) scorpion toxin superfamily. Sodium channel inhibitor family. Alpha subfamily. In terms of tissue distribution, expressed by the venom gland.

Its subcellular location is the secreted. Its function is as follows. Alpha toxins bind voltage-independently at site-3 of sodium channels (Nav) and inhibit the inactivation of the activated channels, thereby blocking neuronal transmission. This chain is Alpha-toxin Tf3, found in Tityus fasciolatus (Central Brazilian scorpion).